The chain runs to 459 residues: Argininosuccinate lyase (459 aa).

Belongs to the lyase 1 family. Argininosuccinate lyase subfamily.

It is found in the cytoplasm. It carries out the reaction 2-(N(omega)-L-arginino)succinate = fumarate + L-arginine. Its pathway is amino-acid biosynthesis; L-arginine biosynthesis; L-arginine from L-ornithine and carbamoyl phosphate: step 3/3. This is Argininosuccinate lyase from Lactococcus lactis subsp. lactis (strain IL1403) (Streptococcus lactis).